A 490-amino-acid polypeptide reads, in one-letter code: ATP-dependent 6-phosphofructokinase (490 aa).

Residues Gly-109, 175-176 (RG), and 200-203 (GDGT) each bind ATP. Asp-201 lines the Mg(2+) pocket. Residues 229-231 (TID), 274-276 (MGR), Glu-327, and 383-386 (YMIR) each bind substrate. The active-site Proton acceptor is the Asp-231. The Peroxisomal targeting signal motif lies at 488–490 (SKL).

It belongs to the phosphofructokinase type A (PFKA) family. PPi-dependent PFK group II subfamily. Atypical ATP-dependent clade 'X' sub-subfamily. As to quaternary structure, homotetramer. It depends on Mg(2+) as a cofactor.

It localises to the glycosome. The enzyme catalyses beta-D-fructose 6-phosphate + ATP = beta-D-fructose 1,6-bisphosphate + ADP + H(+). It functions in the pathway carbohydrate degradation; glycolysis; D-glyceraldehyde 3-phosphate and glycerone phosphate from D-glucose: step 3/4. Its activity is regulated as follows. Allosterically activated by AMP. Functionally, catalyzes the phosphorylation of D-fructose 6-phosphate to fructose 1,6-bisphosphate by ATP, the first committing step of glycolysis. This Trypanoplasma borreli protein is ATP-dependent 6-phosphofructokinase.